The chain runs to 359 residues: MRQIIIAAGIAILVSIMLTPVLIRVFSRQGFGQEIRDDGPQHHQKKRGTPSMGGVAILAGMWAGYFGSHLVGIAFGSDGPSASGLLVLALATMLGGVGFIDDFIKIRKARNLGLNKTSKTVGQILSALVFGVLVLQFRNTDGLTPGSPQLSYVREIATVAMPAAIFVLFCVILVMSWSNAVNFTDGLDGLAGGCMAMVTGAYVIVTFWQYRNACSTHPGIACYNVRDPLDLAVIAAATAGACIGFLWWNAAPAKIFMGDTGSLALGGVIAGLSVTTRTELLAVVLGALFVAEIVSVVLQIAAFRTTGRRVFRMAPFHHHFELLGWAETTVIIRFWLLTAIACGLGLALFYGEWLATIGD.

10 helical membrane-spanning segments follow: residues 3–23 (QIIIAAGIAILVSIMLTPVLI), 55–75 (VAILAGMWAGYFGSHLVGIAF), 84–104 (GLLVLALATMLGGVGFIDDFI), 117–137 (TSKTVGQILSALVFGVLVLQF), 156–176 (IATVAMPAAIFVLFCVILVMS), 187–207 (LDGLAGGCMAMVTGAYVIVTF), 231–251 (LAVIAAATAGACIGFLWWNAA), 255–275 (IFMGDTGSLALGGVIAGLSVT), 280–300 (LLAVVLGALFVAEIVSVVLQI), and 334–354 (FWLLTAIACGLGLALFYGEWL).

Belongs to the glycosyltransferase 4 family. MraY subfamily. The cofactor is Mg(2+).

It is found in the cell membrane. It catalyses the reaction UDP-N-acetyl-alpha-D-muramoyl-L-alanyl-gamma-D-glutamyl-meso-2,6-diaminopimeloyl-D-alanyl-D-alanine + di-trans,octa-cis-undecaprenyl phosphate = di-trans,octa-cis-undecaprenyl diphospho-N-acetyl-alpha-D-muramoyl-L-alanyl-D-glutamyl-meso-2,6-diaminopimeloyl-D-alanyl-D-alanine + UMP. The protein operates within cell wall biogenesis; peptidoglycan biosynthesis. Functionally, catalyzes the initial step of the lipid cycle reactions in the biosynthesis of the cell wall peptidoglycan: transfers peptidoglycan precursor phospho-MurNAc-pentapeptide from UDP-MurNAc-pentapeptide onto the lipid carrier undecaprenyl phosphate, yielding undecaprenyl-pyrophosphoryl-MurNAc-pentapeptide, known as lipid I. The protein is Phospho-N-acetylmuramoyl-pentapeptide-transferase of Mycobacteroides abscessus (strain ATCC 19977 / DSM 44196 / CCUG 20993 / CIP 104536 / JCM 13569 / NCTC 13031 / TMC 1543 / L948) (Mycobacterium abscessus).